The chain runs to 323 residues: Mas-related G-protein coupled receptor member B4 (323 aa).

Residues 1-34 (MSPTTQAWSINNTVVKENYYTEILSCITTFNTLN) lie on the Extracellular side of the membrane. N-linked (GlcNAc...) asparagine glycosylation is present at Asn-11. Residues 35-55 (FLIVIISVVGMAGNATVLWLL) traverse the membrane as a helical segment. Residues 56-63 (GFHMHRNA) lie on the Cytoplasmic side of the membrane. A helical transmembrane segment spans residues 64-84 (FSVYVLNLAGADFLYLCAQTV). Residues 85 to 98 (YSLECVLQFDNSYF) lie on the Extracellular side of the membrane. Residues 99 to 119 (YFLLTILMFNYLAGFCMIAAI) form a helical membrane-spanning segment. The Cytoplasmic portion of the chain corresponds to 120–147 (STERCLSVTWPIWYHCQRPRHTSATVCA). A helical membrane pass occupies residues 148–168 (LFWAFSLLLSLLLGQGCGFLF). Residues 169–180 (SKFDYSFCRYCN) are Extracellular-facing. Residues 181–201 (FIATAFLIVIFMVLFVSSLAL) form a helical membrane-spanning segment. At 202-224 (LAKIICGSHRIPVTRFYVTIALT) the chain is on the cytoplasmic side. A helical membrane pass occupies residues 225–245 (VLVFIFFGLPIGICVFLLPWI). Topologically, residues 246–255 (HMMLSSFFYE) are extracellular. A helical transmembrane segment spans residues 256-276 (MVTLLSCVNSCANPIIYFFVG). Topologically, residues 277 to 323 (SIRHHRLQRQTLKLLLQRAMQDTPEEEGGERGPSQKSEDLEVVRCSS) are cytoplasmic. The segment at 298 to 323 (DTPEEEGGERGPSQKSEDLEVVRCSS) is disordered. Residues 312-323 (KSEDLEVVRCSS) are compositionally biased toward basic and acidic residues.

The protein belongs to the G-protein coupled receptor 1 family. Mas subfamily. As to expression, expressed strongly in newborn dorsal root ganglia, adult dorsal root ganglia and trigeminal ganlia.

It is found in the membrane. Functionally, orphan receptor. Probably involved in the function of nociceptive neurons. May regulate nociceptor function and/or development, including the sensation or modulation of pain. This is Mas-related G-protein coupled receptor member B4 (Mrgprb4) from Rattus norvegicus (Rat).